The chain runs to 100 residues: Urease subunit gamma (100 aa).

It belongs to the urease gamma subunit family. Heterotrimer of UreA (gamma), UreB (beta) and UreC (alpha) subunits. Three heterotrimers associate to form the active enzyme.

The protein localises to the cytoplasm. The catalysed reaction is urea + 2 H2O + H(+) = hydrogencarbonate + 2 NH4(+). It functions in the pathway nitrogen metabolism; urea degradation; CO(2) and NH(3) from urea (urease route): step 1/1. This is Urease subunit gamma from Rhizobium leguminosarum bv. viciae.